A 760-amino-acid chain; its full sequence is Xaa-Pro dipeptidyl-peptidase (760 aa).

Catalysis depends on charge relay system residues Ser349, Asp469, and His499.

The protein belongs to the peptidase S15 family. Homodimer.

It is found in the cytoplasm. The enzyme catalyses Hydrolyzes Xaa-Pro-|- bonds to release unblocked, N-terminal dipeptides from substrates including Ala-Pro-|-p-nitroanilide and (sequentially) Tyr-Pro-|-Phe-Pro-|-Gly-Pro-|-Ile.. Its function is as follows. Removes N-terminal dipeptides sequentially from polypeptides having unsubstituted N-termini provided that the penultimate residue is proline. This chain is Xaa-Pro dipeptidyl-peptidase, found in Streptococcus pyogenes serotype M28 (strain MGAS6180).